We begin with the raw amino-acid sequence, 417 residues long: 4-hydroxy-3-methylbut-2-en-1-yl diphosphate synthase (flavodoxin) (417 aa).

The [4Fe-4S] cluster site is built by C305, C308, C351, and E358.

The protein belongs to the IspG family. [4Fe-4S] cluster is required as a cofactor.

It catalyses the reaction (2E)-4-hydroxy-3-methylbut-2-enyl diphosphate + oxidized [flavodoxin] + H2O + 2 H(+) = 2-C-methyl-D-erythritol 2,4-cyclic diphosphate + reduced [flavodoxin]. The protein operates within isoprenoid biosynthesis; isopentenyl diphosphate biosynthesis via DXP pathway; isopentenyl diphosphate from 1-deoxy-D-xylulose 5-phosphate: step 5/6. Converts 2C-methyl-D-erythritol 2,4-cyclodiphosphate (ME-2,4cPP) into 1-hydroxy-2-methyl-2-(E)-butenyl 4-diphosphate. This is 4-hydroxy-3-methylbut-2-en-1-yl diphosphate synthase (flavodoxin) from Nitrosomonas europaea (strain ATCC 19718 / CIP 103999 / KCTC 2705 / NBRC 14298).